Reading from the N-terminus, the 154-residue chain is Crossover junction endodeoxyribonuclease RuvC (154 aa).

Catalysis depends on residues aspartate 7, glutamate 67, and aspartate 139. Mg(2+) contacts are provided by aspartate 7, glutamate 67, and aspartate 139.

This sequence belongs to the RuvC family. In terms of assembly, homodimer which binds Holliday junction (HJ) DNA. The HJ becomes 2-fold symmetrical on binding to RuvC with unstacked arms; it has a different conformation from HJ DNA in complex with RuvA. In the full resolvosome a probable DNA-RuvA(4)-RuvB(12)-RuvC(2) complex forms which resolves the HJ. Mg(2+) is required as a cofactor.

The protein resides in the cytoplasm. It catalyses the reaction Endonucleolytic cleavage at a junction such as a reciprocal single-stranded crossover between two homologous DNA duplexes (Holliday junction).. The RuvA-RuvB-RuvC complex processes Holliday junction (HJ) DNA during genetic recombination and DNA repair. Endonuclease that resolves HJ intermediates. Cleaves cruciform DNA by making single-stranded nicks across the HJ at symmetrical positions within the homologous arms, yielding a 5'-phosphate and a 3'-hydroxyl group; requires a central core of homology in the junction. The consensus cleavage sequence is 5'-(A/T)TT(C/G)-3'. Cleavage occurs on the 3'-side of the TT dinucleotide at the point of strand exchange. HJ branch migration catalyzed by RuvA-RuvB allows RuvC to scan DNA until it finds its consensus sequence, where it cleaves and resolves the cruciform DNA. The polypeptide is Crossover junction endodeoxyribonuclease RuvC (Synechococcus sp. (strain WH7803)).